A 246-amino-acid polypeptide reads, in one-letter code: 4'-phosphopantetheinyl transferase Svp (246 aa).

Residues 223 to 232 (AGTAEESAEG) are compositionally biased toward low complexity. The disordered stretch occupies residues 223-246 (AGTAEESAEGAGKEATADDRTAVP). Over residues 233 to 246 (AGKEATADDRTAVP) the composition is skewed to basic and acidic residues.

It belongs to the P-Pant transferase superfamily. Gsp/Sfp/HetI/AcpT family.

The enzyme catalyses apo-[ACP] + CoA = holo-[ACP] + adenosine 3',5'-bisphosphate + H(+). In terms of biological role, transfers the 4'-phosphopantetheine moiety from coenzyme A to a Ser of an acyl-carrier-protein. The enzyme is able to transfer the cofactor to a broad range of enzymes with acyl- or peptidyl-carrier protein domains. This is 4'-phosphopantetheinyl transferase Svp (svp) from Streptomyces mobaraensis (Streptoverticillium mobaraense).